A 273-amino-acid chain; its full sequence is Tryptophan synthase alpha chain (273 aa).

Catalysis depends on proton acceptor residues Glu49 and Asp60.

It belongs to the TrpA family. As to quaternary structure, tetramer of two alpha and two beta chains.

The catalysed reaction is (1S,2R)-1-C-(indol-3-yl)glycerol 3-phosphate + L-serine = D-glyceraldehyde 3-phosphate + L-tryptophan + H2O. It participates in amino-acid biosynthesis; L-tryptophan biosynthesis; L-tryptophan from chorismate: step 5/5. Its function is as follows. The alpha subunit is responsible for the aldol cleavage of indoleglycerol phosphate to indole and glyceraldehyde 3-phosphate. The sequence is that of Tryptophan synthase alpha chain from Albidiferax ferrireducens (strain ATCC BAA-621 / DSM 15236 / T118) (Rhodoferax ferrireducens).